A 435-amino-acid chain; its full sequence is MKPTVAIVGRPNVGKSTLFNRILNKRVAIVDDVPGVTRDRNFSEAEWCGKQFSLIDTGGYSRTGDTFSAAVLEQSLIALQEANIIILVVDLRTGITDIDLEITELLRKQASEKTVFLAVNKVDNNLMESDAQLFRKLGLSEPYFVSALDGRGVAELLDAVIAHIPEDDAPESDDTVKLTVIGRPNVGKSSFVNAILGQNRQIVTDIPGTTRDAVDSRFKRNGQDFLLIDTAGLRRKAKVDDNIELFSALRTEKAIERCDVAIILLDATQGLENQDLKVINAAAQKKRGMVIAVNKWDLIEKDDKTAIAYEKRLREELRNLSYVPLLFISALTKQRIYKAIDIAYQVWQNRRMKIDTSRLNNLMLNDIKRTPPSSKSGKEIKIKYLTQLATEPPLFGLFAGNPQLIEEHYKRFLERKLREHFGFEGTPIELKFRRK.

2 consecutive EngA-type G domains span residues 3-168 (PTVA…PEDD) and 176-351 (VKLT…QNRR). Residues 9-16 (GRPNVGKS), 56-60 (DTGGY), 120-123 (NKVD), 182-189 (GRPNVGKS), 229-233 (DTAGL), and 294-297 (NKWD) each bind GTP. The KH-like domain occupies 352–435 (MKIDTSRLNN…TPIELKFRRK (84 aa)).

This sequence belongs to the TRAFAC class TrmE-Era-EngA-EngB-Septin-like GTPase superfamily. EngA (Der) GTPase family. In terms of assembly, associates with the 50S ribosomal subunit.

GTPase that plays an essential role in the late steps of ribosome biogenesis. The protein is GTPase Der of Chloroherpeton thalassium (strain ATCC 35110 / GB-78).